We begin with the raw amino-acid sequence, 279 residues long: Thiazole synthase (279 aa).

Lysine 116 functions as the Schiff-base intermediate with DXP in the catalytic mechanism. 1-deoxy-D-xylulose 5-phosphate-binding positions include glycine 177, alanine 203–glycine 204, and asparagine 225–serine 226.

The protein belongs to the ThiG family. Homotetramer. Forms heterodimers with either ThiH or ThiS.

It is found in the cytoplasm. The enzyme catalyses [ThiS sulfur-carrier protein]-C-terminal-Gly-aminoethanethioate + 2-iminoacetate + 1-deoxy-D-xylulose 5-phosphate = [ThiS sulfur-carrier protein]-C-terminal Gly-Gly + 2-[(2R,5Z)-2-carboxy-4-methylthiazol-5(2H)-ylidene]ethyl phosphate + 2 H2O + H(+). It participates in cofactor biosynthesis; thiamine diphosphate biosynthesis. Functionally, catalyzes the rearrangement of 1-deoxy-D-xylulose 5-phosphate (DXP) to produce the thiazole phosphate moiety of thiamine. Sulfur is provided by the thiocarboxylate moiety of the carrier protein ThiS. In vitro, sulfur can be provided by H(2)S. The chain is Thiazole synthase from Trichodesmium erythraeum (strain IMS101).